The sequence spans 414 residues: Arrestin domain-containing protein 3 (414 aa).

2 consecutive short sequence motifs (PPxY motif) follow at residues 346-349 (PPSY) and 391-394 (PPLY). Residues 393 to 414 (LYSEIDPNPDQSSEDRPSCPSR) form a disordered region. Residues 405–414 (SEDRPSCPSR) show a composition bias toward basic and acidic residues.

The protein belongs to the arrestin family. As to quaternary structure, interacts (via PPxY motifs) with NEDD4 (via WW domains). Interacts with ADRB2. Interacts with ADRB3. Interacts with HGS (via PPxY motifs). Does not bind TXN (thioredoxin). Interacts with ITCH.

Its subcellular location is the cytoplasm. The protein localises to the cell membrane. It is found in the lysosome. The protein resides in the endosome. It localises to the early endosome. Its function is as follows. Adapter protein that plays a role in regulating cell-surface expression of adrenergic receptors and probably also other G protein-coupled receptors. Plays a role in NEDD4-mediated ubiquitination and endocytosis af activated ADRB2 and subsequent ADRB2 degradation. May recruit NEDD4 to ADRB2. Alternatively, may function as adapter protein that does not play a major role in recruiting NEDD4 to ADRB2, but rather plays a role in a targeting ADRB2 to endosomes. This chain is Arrestin domain-containing protein 3 (Arrdc3), found in Rattus norvegicus (Rat).